The following is a 508-amino-acid chain: Photosystem II CP47 reaction center protein (508 aa).

A run of 6 helical transmembrane segments spans residues 21–36 (SVHI…WAGS), 101–115 (IVFS…IWHW), 140–156 (GIHL…FGAF), 203–218 (IAAG…FHLS), 237–252 (VLSS…AFVV), and 457–472 (SFAL…HGAR).

Belongs to the PsbB/PsbC family. PsbB subfamily. PSII is composed of 1 copy each of membrane proteins PsbA, PsbB, PsbC, PsbD, PsbE, PsbF, PsbH, PsbI, PsbJ, PsbK, PsbL, PsbM, PsbT, PsbX, PsbY, PsbZ, Psb30/Ycf12, at least 3 peripheral proteins of the oxygen-evolving complex and a large number of cofactors. It forms dimeric complexes. Binds multiple chlorophylls. PSII binds additional chlorophylls, carotenoids and specific lipids. serves as cofactor.

The protein resides in the plastid. The protein localises to the chloroplast thylakoid membrane. Its function is as follows. One of the components of the core complex of photosystem II (PSII). It binds chlorophyll and helps catalyze the primary light-induced photochemical processes of PSII. PSII is a light-driven water:plastoquinone oxidoreductase, using light energy to abstract electrons from H(2)O, generating O(2) and a proton gradient subsequently used for ATP formation. The chain is Photosystem II CP47 reaction center protein from Phaseolus vulgaris (Kidney bean).